A 336-amino-acid chain; its full sequence is Atypical chemokine receptor 1 (336 aa).

The Extracellular portion of the chain corresponds to 1 to 63 (MGNCLHQAEL…CSLLNDSSLP (63 aa)). N-linked (GlcNAc...) asparagine glycans are attached at residues Asn-16, Asn-27, Asn-33, and Asn-58. 2 disulfide bridges follow: Cys-51/Cys-276 and Cys-129/Cys-195. Residues 64–84 (FFILASDLGILASSTVLFMLF) traverse the membrane as a helical segment. At 85-95 (RPLFRWQLCPG) the chain is on the cytoplasmic side. Residues 96-116 (WPVLAQLAVGSALFSIVVPIL) form a helical membrane-spanning segment. At 117-129 (APGLGNTHSSALC) the chain is on the extracellular side. A helical transmembrane segment spans residues 130–153 (SLGYCVWYGSAFAQALLLGCHASL). At 154 to 166 (GPKLGAGQVPGLT) the chain is on the cytoplasmic side. The helical transmembrane segment at 167–187 (LGLPVGLWGATALLTLPITLA) threads the bilayer. Over 188 to 207 (SGASDGLCTPIYSTELEALQ) the chain is Extracellular. A helical membrane pass occupies residues 208 to 228 (ATHAVACFAIFVLLPLGLFGA). The Cytoplasmic portion of the chain corresponds to 229–244 (KGLKKALGMGPGPWMN). Residues 245–265 (ILWVWFIFWWPHGLVLGLDFL) traverse the membrane as a helical segment. Residues 266–287 (VGSKLSLLPTCLAQQVLDLLLN) are Extracellular-facing. A helical membrane pass occupies residues 288–308 (LAEALAIVHCVATPLLLALFC). The Cytoplasmic segment spans residues 309 to 336 (HQTTRTLLPSLPLPERWSSPVDTLGSKS).

Belongs to the G-protein coupled receptor 1 family. Atypical chemokine receptor subfamily.

It localises to the early endosome. Its subcellular location is the recycling endosome. The protein resides in the membrane. In terms of biological role, atypical chemokine receptor that controls chemokine levels and localization via high-affinity chemokine binding that is uncoupled from classic ligand-driven signal transduction cascades, resulting instead in chemokine sequestration, degradation, or transcytosis. Also known as interceptor (internalizing receptor) or chemokine-scavenging receptor or chemokine decoy receptor. Has a promiscuous chemokine-binding profile, interacting with inflammatory chemokines of both the CXC and the CC subfamilies but not with homeostatic chemokines. Acts as a receptor for chemokines including CCL2, CCL5, CCL7, CCL11, CCL13, CCL14, CCL17, CXCL5, CXCL6, IL8/CXCL8, CXCL11, GRO, RANTES, MCP-1 and TARC. May regulate chemokine bioavailability and, consequently, leukocyte recruitment through two distinct mechanisms: when expressed in endothelial cells, it sustains the abluminal to luminal transcytosis of tissue-derived chemokines and their subsequent presentation to circulating leukocytes; when expressed in erythrocytes, serves as blood reservoir of cognate chemokines but also as a chemokine sink, buffering potential surges in plasma chemokine levels. In Saimiri boliviensis boliviensis (Bolivian squirrel monkey), this protein is Atypical chemokine receptor 1 (ACKR1).